Reading from the N-terminus, the 85-residue chain is Coiled-coil-helix-coiled-coil-helix domain-containing protein 7 (85 aa).

The CHCH domain maps to 13–55; it reads SNPCLEETDASTKCMDDNRYEKDLCTPYFVKYKNCRKFWNGIM. 2 short sequence motifs (cx9C motif) span residues 16 to 26 and 37 to 47; these read CLEETDASTKC and CTPYFVKYKNC. Disulfide bonds link Cys16/Cys47 and Cys26/Cys37.

The protein belongs to the CHCHD7 family.

The protein localises to the mitochondrion intermembrane space. This chain is Coiled-coil-helix-coiled-coil-helix domain-containing protein 7 (chchd7), found in Xenopus tropicalis (Western clawed frog).